Here is a 319-residue protein sequence, read N- to C-terminus: Methyltransferase tpcM (319 aa).

Positions 63-155 (DVGAGIGPYA…QLRPGGTFAC (93 aa)) are methyltransferase domain.

This sequence belongs to the methyltransferase superfamily. In terms of tissue distribution, specifically expressed in conidia.

The protein operates within secondary metabolite biosynthesis. Methyltransferase; part of the gene cluster that mediates the biosynthesis of trypacidin, a mycotoxin with antiprotozoal activity and that plays a role in the infection process. The pathway begins with the synthesis of atrochrysone thioester by the polyketide synthase (PKS) tpcC. The atrochrysone carboxyl ACP thioesterase tpcB then breaks the thioester bond and releases the atrochrysone carboxylic acid from tpcC. The decarboxylase tpcK converts atrochrysone carboxylic acid to atrochrysone which is further reduced into emodin anthrone. The next step is performed by the emodin anthrone oxygenase tpcL that catalyzes the oxidation of emodinanthrone to emodin. Emodin O-methyltransferase encoded by tpcA catalyzes methylation of the 8-hydroxy group of emodin to form questin. Ring cleavage of questin by questin oxidase tpcI leads to desmethylsulochrin via several intermediates including questin epoxide. Another methylation step catalyzed by tpcM leads to the formation of sulochrin which is further converted to monomethylsulfochrin by tpcH. Finally, the tpcJ catalyzes the conversion of monomethylsulfochrin to trypacidin. Trypacidin is toxic for human pulmonary and bronchial epithelial cells by initiating the intracellular formation of nitric oxide (NO) and hydrogen peroxide (H(2)O(2)), thus triggering host necrotic cell death. The trypacidin pathway is also able to produce endocrocin via a distinct route from the endocrocin Enc pathway. The chain is Methyltransferase tpcM from Aspergillus fumigatus (strain ATCC MYA-4609 / CBS 101355 / FGSC A1100 / Af293) (Neosartorya fumigata).